Reading from the N-terminus, the 277-residue chain is MDNAVDRHVFYISDGTAITAEVLGHAVMSQFPVTISSITLPFVENESRARAVKDQIDAIYHQTGVRPLVFYSIVLPEIRAIILESEGFCQDIVQALVAPLQQEMKLDPTPIAHRTHGLNPNNLNKYDARIAAIDYTLAHDDGISLRNLDQAQVILLGVSRCGKTPTSLYLAMQFGIRAANYPFIADDMDNLVLPASLKPLQHKLFGLTIDPERLAAIREERRENSRYASLRQCRMEVAEVEALYRKNQIPWINSTNYSVEEIATKILDIMGLSRRMY.

157 to 164 is a binding site for ADP; it reads GVSRCGKT.

This sequence belongs to the pyruvate, phosphate/water dikinase regulatory protein family. PSRP subfamily.

It carries out the reaction [pyruvate, water dikinase] + ADP = [pyruvate, water dikinase]-phosphate + AMP + H(+). The catalysed reaction is [pyruvate, water dikinase]-phosphate + phosphate + H(+) = [pyruvate, water dikinase] + diphosphate. Functionally, bifunctional serine/threonine kinase and phosphorylase involved in the regulation of the phosphoenolpyruvate synthase (PEPS) by catalyzing its phosphorylation/dephosphorylation. The chain is Phosphoenolpyruvate synthase regulatory protein from Escherichia coli O17:K52:H18 (strain UMN026 / ExPEC).